We begin with the raw amino-acid sequence, 295 residues long: MRRLTDSFILGLAKGAVIPGLYPFRMTEGRSSLEQIGVVITVAISFLLTFKKFDPRFYKPIGDFKIVFLSLMAAKLPSFLSAVVMICLIFSEMRLRMILSRCVLIMPSYSPAVFTGMMVSLFFKSQMFDDYSVLTTTAFLLPFTLRYGWMIRSSGFLISLQKYRPILKSTSFREVDLKYLVKFTVEFLLLFTILWIGKIFLSMPKSNHLFFLTVVNNVFFKLNVFKAAACAMVAILSGLMMNVCLYRIIFEAFLGLGFSSIMLTLSSDLKDRSFYAGDLLNGFFCLVVCCMYFGV.

8 helical membrane-spanning segments follow: residues L33 to F53, I66 to I86, V103 to F123, Y131 to I151, F183 to M203, V218 to G238, V243 to L263, and F274 to G294.

It is found in the host membrane. In Homo sapiens (Human), this protein is Protein U26 (U26).